Consider the following 521-residue polypeptide: MPRSWTDIVAEKRAIRDEKLTKCYGENVPSDPRIIAAKDIQALTKLLEARNVTAEAVVLAHIAKAKEAHQRTNCLTEICFDEALEHARELDAFQQEHGRLKGPLHGVPVSLKDQFNLKGLDSTLGYVGRAFHPAASDCVLVKVLKQLGAVILAKTNLPQCILWGETDNPLWGLTTHPMNPEYTPGGSSGGEGTLLALNGSMLGWGTDIGGSIRVPSHMNGLWGFKPSSGRFSYEAVAVSQDGQQQIPSVVGPMARTLSTITLASKAMIEAECWRLDPQLPPMPWRKDVFQEYLQKPLVIGIMVDDGTVKVHPPIERVFKEFCKKLEAAGHELVPWDTSLNADCIKIMDEHYIADGGEDIRRDMAAGGEPYMPHVQNLVDRGSAISVYEYWQLNKRKKATQAAYNTMWNATKSSSGKPVDVLLVPTMPHTAIPHRTLRYPGYTKLFNMLDYSALSFPAGTALKALDSVCTGEYEPRNAADAWNWSLYDIEKMDGYSVGLQIVGRRMEEEKVLGAAHQVQQLL.

Catalysis depends on charge relay system residues K112 and S187. Residues S187 and 208–211 (IGGS) each bind substrate. S211 functions as the Acyl-ester intermediate in the catalytic mechanism.

Belongs to the amidase family.

It carries out the reaction a monocarboxylic acid amide + H2O = a monocarboxylate + NH4(+). It participates in xenobiotic degradation. Its function is as follows. Amidase; part of the Fusarium detoxification of benzoxazolinone cluster 1 (FDB1) involved in the degradation of benzoxazolinones produced by the host plant. Maize, wheat, and rye produce the 2 benzoxazinone phytoanticipins 2,4-dihy-droxy-7-methoxy-1,4-benzoxazin-3-one (DIMBOA) and 2,4-dihydroxy-1,4-benzoxazin-3-one (DIBOA) that, due to their inherent instability once released, spontaneously degrade to the more stable corresponding benzoxazolinones, 6-methoxy-2-benzoxazolinone (MBOA) and 2-benzoxazolinone (BOA), respectively. The first step in the detoxification of benzoxazolinones involves the hydrolysis of the cyclic ester bond of benzoxazolinones by the FDB1 cluster gamma-lactamase MBL1 to aminophenols. MBL1 is able to convert BOA into 2-aminophenol (2-AP), as well as MBOA into 5-methoxy-2-aminophenol (2-AMP). The FDB2 cluster N-malonyltransferase FDB2/NAT1 then metabolizes aminophenols via N-malonylation to non-toxic malonamic acids. FDB2/NAT1 converts 2-AP into N-(2-hydroxyphenyl) malonamic acid (HPMA) and 2-AMP into N-(2-hydroxy-4-methoxyphenyl) malonamic acid (HMPMA). The duplicated dienlactone hydrolases DLH1 and DLH2 may provide redundant function for hydrolyzing the lactone moiety in the BOA molecule. The roles of the amidases an other enzymes encoded by the 2 FDB clusters have not been identified so far. The protein is Amidase 1 of Gibberella moniliformis (strain M3125 / FGSC 7600) (Maize ear and stalk rot fungus).